The chain runs to 65 residues: Sec-independent protein translocase protein TatA (65 aa).

Residues 9–29 (ILIIVLLVVVVFGIGKLPQVG) traverse the membrane as a helical segment. Residues 43–65 (SSGEEEKEEVETKEETKTIEKSE) form a disordered region. The span at 45–54 (GEEEKEEVET) shows a compositional bias: acidic residues. The span at 55–65 (KEETKTIEKSE) shows a compositional bias: basic and acidic residues.

Belongs to the TatA/E family. As to quaternary structure, forms a complex with TatC.

It is found in the cell membrane. Its function is as follows. Part of the twin-arginine translocation (Tat) system that transports large folded proteins containing a characteristic twin-arginine motif in their signal peptide across membranes. TatA could form the protein-conducting channel of the Tat system. This Dehalococcoides mccartyi (strain ATCC BAA-2266 / KCTC 15142 / 195) (Dehalococcoides ethenogenes (strain 195)) protein is Sec-independent protein translocase protein TatA.